We begin with the raw amino-acid sequence, 182 residues long: Large ribosomal subunit protein uL10 (182 aa).

Belongs to the universal ribosomal protein uL10 family. In terms of assembly, part of the ribosomal stalk of the 50S ribosomal subunit. The N-terminus interacts with L11 and the large rRNA to form the base of the stalk. The C-terminus forms an elongated spine to which L12 dimers bind in a sequential fashion forming a multimeric L10(L12)X complex.

Forms part of the ribosomal stalk, playing a central role in the interaction of the ribosome with GTP-bound translation factors. The protein is Large ribosomal subunit protein uL10 of Leptothrix cholodnii (strain ATCC 51168 / LMG 8142 / SP-6) (Leptothrix discophora (strain SP-6)).